Here is a 303-residue protein sequence, read N- to C-terminus: tRNA pseudouridine synthase B (303 aa).

The Nucleophile role is filled by D47.

Belongs to the pseudouridine synthase TruB family. Type 1 subfamily.

It catalyses the reaction uridine(55) in tRNA = pseudouridine(55) in tRNA. Its function is as follows. Responsible for synthesis of pseudouridine from uracil-55 in the psi GC loop of transfer RNAs. The sequence is that of tRNA pseudouridine synthase B from Roseobacter denitrificans (strain ATCC 33942 / OCh 114) (Erythrobacter sp. (strain OCh 114)).